The chain runs to 286 residues: Pantothenate synthetase (286 aa).

Met31–His38 is a binding site for ATP. His38 functions as the Proton donor in the catalytic mechanism. Gln62 serves as a coordination point for (R)-pantoate. Gln62 provides a ligand contact to beta-alanine. Gly148 to Asp151 is an ATP binding site. Gln154 is a (R)-pantoate binding site. ATP contacts are provided by residues Val177 and Lys185–Arg188.

This sequence belongs to the pantothenate synthetase family. Homodimer.

The protein resides in the cytoplasm. The catalysed reaction is (R)-pantoate + beta-alanine + ATP = (R)-pantothenate + AMP + diphosphate + H(+). It functions in the pathway cofactor biosynthesis; (R)-pantothenate biosynthesis; (R)-pantothenate from (R)-pantoate and beta-alanine: step 1/1. Catalyzes the condensation of pantoate with beta-alanine in an ATP-dependent reaction via a pantoyl-adenylate intermediate. The protein is Pantothenate synthetase of Staphylococcus carnosus (strain TM300).